Here is a 307-residue protein sequence, read N- to C-terminus: Small ribosomal subunit protein uS3 (307 aa).

One can recognise a KH type-2 domain in the interval 17–86; sequence MDEYFAEQLN…NPQIDAQEVK (70 aa). The span at 201–226 shows a compositional bias: basic and acidic residues; the sequence is IEEPAEKPAEKQVEKPAVAPKKEAAK. The interval 201-265 is disordered; sequence IEEPAEKPAE…QVEASEDFEE (65 aa). Residues 240-265 are compositionally biased toward acidic residues; the sequence is PTEEPEVAEPEEAEEAQVEASEDFEE.

The protein belongs to the universal ribosomal protein uS3 family. Part of the 30S ribosomal subunit.

Functionally, binds the lower part of the 30S subunit head. The sequence is that of Small ribosomal subunit protein uS3 from Methanosarcina mazei (strain ATCC BAA-159 / DSM 3647 / Goe1 / Go1 / JCM 11833 / OCM 88) (Methanosarcina frisia).